The sequence spans 207 residues: Protein GET1 (207 aa).

At 1 to 4 (MPSL) the chain is on the lumenal side. Residues 5-24 (LISVLFLHIAIYIINTIGAS) traverse the membrane as a helical segment. The Cytoplasmic segment spans residues 25–110 (TIDSLLWLIY…LFDVAVKALR (86 aa)). Residues 44–97 (MAREQHQMKLEVVQLKREMNATSSQDEFAKWAKLRRRHDKALEEYEVKNKQFSR) adopt a coiled-coil conformation. A helical membrane pass occupies residues 111–131 (WAGTSGLILLLQFWFSKTPIF). Residues 132-155 (TLPPSWIPWQVEWVLSFPRAPMGT) lie on the Lumenal side of the membrane. A helical membrane pass occupies residues 156–172 (VSIQVWGGACAVMVALV). Residues 173–207 (GEAIGATVRYLYGSKDSMEAIKVGAGAVEKEKKRQ) are Cytoplasmic-facing.

The protein belongs to the WRB/GET1 family. Interacts with GET3.

The protein resides in the endoplasmic reticulum membrane. Required for the post-translational delivery of tail-anchored (TA) proteins to the endoplasmic reticulum. Acts as a membrane receptor for soluble GET3, which recognizes and selectively binds the transmembrane domain of TA proteins in the cytosol. The chain is Protein GET1 from Paracoccidioides lutzii (strain ATCC MYA-826 / Pb01) (Paracoccidioides brasiliensis).